A 229-amino-acid polypeptide reads, in one-letter code: Small ribosomal subunit protein uS3 (229 aa).

One can recognise a KH type-2 domain in the interval 18–87 (IDEYLAKQYY…NPQITITNVE (70 aa)).

It belongs to the universal ribosomal protein uS3 family. As to quaternary structure, part of the 30S ribosomal subunit.

In terms of biological role, binds the lower part of the 30S subunit head. This is Small ribosomal subunit protein uS3 from Saccharolobus solfataricus (strain ATCC 35092 / DSM 1617 / JCM 11322 / P2) (Sulfolobus solfataricus).